The chain runs to 236 residues: MTKKEMFYEGKGKKLFKTDDENLLISEFKDDLTAFNAEKRGNESGKGVLNCKISTEIFHLLEKNGIKTHLVETISDTEQVVKKCKIVPIEVIIRNVATGSLIKRLGIKDGTVLPFALVEFCLKDDALGDPFINDEHCLILNLVQNEAQISEIKNMARKINSILTPFFDNKNLRLIDFKIELGLTKDNDLVLADEISPDSCRFWDKFSNEKLDKDRFRQDLGNVKMAYEEVLKRILN.

Belongs to the SAICAR synthetase family.

It catalyses the reaction 5-amino-1-(5-phospho-D-ribosyl)imidazole-4-carboxylate + L-aspartate + ATP = (2S)-2-[5-amino-1-(5-phospho-beta-D-ribosyl)imidazole-4-carboxamido]succinate + ADP + phosphate + 2 H(+). Its pathway is purine metabolism; IMP biosynthesis via de novo pathway; 5-amino-1-(5-phospho-D-ribosyl)imidazole-4-carboxamide from 5-amino-1-(5-phospho-D-ribosyl)imidazole-4-carboxylate: step 1/2. This chain is Phosphoribosylaminoimidazole-succinocarboxamide synthase, found in Campylobacter jejuni subsp. doylei (strain ATCC BAA-1458 / RM4099 / 269.97).